The primary structure comprises 345 residues: Holliday junction branch migration complex subunit RuvB (345 aa).

The tract at residues 1–182 is large ATPase domain (RuvB-L); that stretch reads MDQRIIASSS…FGIVQRLEFY (182 aa). ATP is bound by residues isoleucine 21, arginine 22, glycine 63, lysine 66, threonine 67, threonine 68, 129–131, arginine 172, tyrosine 182, and arginine 219; that span reads EDF. A Mg(2+)-binding site is contributed by threonine 67. A small ATPAse domain (RuvB-S) region spans residues 183-253; that stretch reads SPQELTRIVI…VAQAAMQMLK (71 aa). Residues 256–345 form a head domain (RuvB-H) region; that stretch reads PEGFDELDRR…PGIGEPGDLF (90 aa). Positions 292, 311, and 316 each coordinate DNA.

The protein belongs to the RuvB family. As to quaternary structure, homohexamer. Forms an RuvA(8)-RuvB(12)-Holliday junction (HJ) complex. HJ DNA is sandwiched between 2 RuvA tetramers; dsDNA enters through RuvA and exits via RuvB. An RuvB hexamer assembles on each DNA strand where it exits the tetramer. Each RuvB hexamer is contacted by two RuvA subunits (via domain III) on 2 adjacent RuvB subunits; this complex drives branch migration. In the full resolvosome a probable DNA-RuvA(4)-RuvB(12)-RuvC(2) complex forms which resolves the HJ.

It localises to the cytoplasm. The catalysed reaction is ATP + H2O = ADP + phosphate + H(+). The RuvA-RuvB-RuvC complex processes Holliday junction (HJ) DNA during genetic recombination and DNA repair, while the RuvA-RuvB complex plays an important role in the rescue of blocked DNA replication forks via replication fork reversal (RFR). RuvA specifically binds to HJ cruciform DNA, conferring on it an open structure. The RuvB hexamer acts as an ATP-dependent pump, pulling dsDNA into and through the RuvAB complex. RuvB forms 2 homohexamers on either side of HJ DNA bound by 1 or 2 RuvA tetramers; 4 subunits per hexamer contact DNA at a time. Coordinated motions by a converter formed by DNA-disengaged RuvB subunits stimulates ATP hydrolysis and nucleotide exchange. Immobilization of the converter enables RuvB to convert the ATP-contained energy into a lever motion, pulling 2 nucleotides of DNA out of the RuvA tetramer per ATP hydrolyzed, thus driving DNA branch migration. The RuvB motors rotate together with the DNA substrate, which together with the progressing nucleotide cycle form the mechanistic basis for DNA recombination by continuous HJ branch migration. Branch migration allows RuvC to scan DNA until it finds its consensus sequence, where it cleaves and resolves cruciform DNA. This Xanthomonas oryzae pv. oryzae (strain MAFF 311018) protein is Holliday junction branch migration complex subunit RuvB.